Reading from the N-terminus, the 968-residue chain is RNA polymerase-associated protein RapA (968 aa).

Residues 164–334 (DVGRRHAPRV…FARLRLLDPN (171 aa)) form the Helicase ATP-binding domain. ATP is bound at residue 177 to 184 (DEVGLGKT). A DEAH box motif is present at residues 280 to 283 (DEAH). Residues 490 to 662 (RVEWLMGYLT…YLASPVQTEG (173 aa)) form the Helicase C-terminal domain.

Belongs to the SNF2/RAD54 helicase family. RapA subfamily. As to quaternary structure, interacts with the RNAP. Has a higher affinity for the core RNAP than for the holoenzyme. Its ATPase activity is stimulated by binding to RNAP.

Functionally, transcription regulator that activates transcription by stimulating RNA polymerase (RNAP) recycling in case of stress conditions such as supercoiled DNA or high salt concentrations. Probably acts by releasing the RNAP, when it is trapped or immobilized on tightly supercoiled DNA. Does not activate transcription on linear DNA. Probably not involved in DNA repair. The polypeptide is RNA polymerase-associated protein RapA (Shigella sonnei (strain Ss046)).